A 526-amino-acid polypeptide reads, in one-letter code: WRKY transcription factor 72A (526 aa).

Composition is skewed to basic and acidic residues over residues 40-52 (KERKSIHNEDDNS) and 60-76 (LTGDKKDDQLESAKADM). Disordered regions lie at residues 40–76 (KERKSIHNEDDNSKSSQQKDLTGDKKDDQLESAKADM) and 170–200 (SSTKSSPSNLSPENSLGEVKDDEKGTDQTWP). A coiled-coil region spans residues 62–106 (GDKKDDQLESAKADMEEVMEENQRLKKHLDKIMKDYRNLQMQFHE). Positions 170 to 185 (SSTKSSPSNLSPENSL) are enriched in low complexity. A DNA-binding region (WRKY) is located at residues 232 to 298 (CDTPTMNDGC…YEGTHNHPLP (67 aa)).

The protein belongs to the WRKY group II-b family. In terms of tissue distribution, expressed in roots, trichomes and fruits.

The protein resides in the nucleus. In terms of biological role, transcription activator involved in the transcriptional regulation of terpene biosynthesis in glandular trichomes. Binds to the promoter of the linalool synthase TPS5 and promotes TPS5 gene transactivation. In association with WRKY72B, contributes to basal defense against root-knot nematodes (RKNs) and potato aphids, as well as Mi-1-mediated gene-for-gene resistance to these pests. Both WRKY72A and WRKY72B are not required for gene-for-gene resistance mediated by Pto, another tomato R gene. The protein is WRKY transcription factor 72A of Solanum lycopersicum (Tomato).